The chain runs to 513 residues: MNNNVITRFAPSPTGFLHIGSARTALFNYLFARHHNGKFLLRIEDTDKERSTKEAVEAIFSGLKWLGLDWNGEVIFQSKRNNLYKEAALKLLQNGKAYYCFTRQEEIERQRQQALENKQHFIFNSEWRDKDPSIYPTDIKPVIRLKTPREGSITIHDTLQGEVVIENSHIDDMVLLRADGTATYMLAVVVDDHDMGITHIIRGNDHLTNAARQLAIYQAFGYAVPSMTHIPLIHGADGAKLSKRHGALGIEAYKDMGYLPESLCNYLLRLGWSHGDDEIISMTQAIDWFNLDSLGKSPAKLDFAKMNSLNSHYLRMLDNDSLTSKIVEILEQNYNKLLQKLAYREEFGGNTERSTAAYIDIREDASTGLTYKLPLAVELPKKFKVSEQEIGYIKQAMPSLLVRSETLLELTRLAQIYLVDSPIIYSQDSKEIIENCDKNLIKQIIENLSELEQFDKESVQNKFKEIAAANDLKLNDIMKPVRALITGMTASPSVFEIAEILGKENILKRLKII.

Positions 11-21 (PSPTGFLHIGS) match the 'HIGH' region motif. A 'KMSKS' region motif is present at residues 240–244 (KLSKR). Lys-243 provides a ligand contact to ATP.

This sequence belongs to the class-I aminoacyl-tRNA synthetase family. Glutamate--tRNA ligase type 1 subfamily. As to quaternary structure, monomer.

It localises to the cytoplasm. The enzyme catalyses tRNA(Glu) + L-glutamate + ATP = L-glutamyl-tRNA(Glu) + AMP + diphosphate. In terms of biological role, catalyzes the attachment of glutamate to tRNA(Glu) in a two-step reaction: glutamate is first activated by ATP to form Glu-AMP and then transferred to the acceptor end of tRNA(Glu). In Rickettsia rickettsii (strain Iowa), this protein is Glutamate--tRNA ligase 2.